The following is a 291-amino-acid chain: G1/S-specific cyclin-D1 (291 aa).

The residue at position 282 (threonine 282) is a Phosphothreonine.

It belongs to the cyclin family. Cyclin D subfamily. In terms of assembly, interacts with the CDK4 and CDK6 protein kinases to form a serine/threonine kinase holoenzyme complex. The cyclin subunit imparts substrate specificity to the complex. Phosphorylation at Thr-282 by MAP kinases is required for ubiquitination and degradation by the DCX(AMBRA1) complex. In terms of processing, ubiquitinated by the DCX(AMBRA1) complex during the transition from G1 to S cell phase, leading to its degradation. The DCX(AMBRA1) complex represents the major regulator of CCND1 stability during the G1/S transition.

It localises to the nucleus. The protein resides in the cytoplasm. In terms of biological role, regulatory component of the cyclin D1-CDK4 (DC) complex that phosphorylates and inhibits members of the retinoblastoma (RB) protein family including RB1 and regulates the cell-cycle during G(1)/S transition. Phosphorylation of RB1 allows dissociation of the transcription factor E2F from the RB/E2F complex and the subsequent transcription of E2F target genes which are responsible for the progression through the G(1) phase. Hypophosphorylates RB1 in early G(1) phase. Cyclin D-CDK4 complexes are major integrators of various mitogenenic and antimitogenic signals. The sequence is that of G1/S-specific cyclin-D1 (ccnd1) from Danio rerio (Zebrafish).